The chain runs to 782 residues: E3 ubiquitin-protein ligase SopA (782 aa).

The segment at 137 to 171 (VSVSANNRPTVSEGRTPPVSPSLSLQATSSPSSPA) is disordered. The span at 157 to 171 (PSLSLQATSSPSSPA) shows a compositional bias: low complexity. The active-site Glycyl thioester intermediate is the C753.

Belongs to the SopA E3 ligase family. Post-translationally, ubiquitinated in the presence of host E1 ubiquitin-activating enzyme, E2 ubiquitin-conjugating enzyme and ubiquitin.

Its subcellular location is the secreted. The protein localises to the host cell. It catalyses the reaction S-ubiquitinyl-[E2 ubiquitin-conjugating enzyme]-L-cysteine + [acceptor protein]-L-lysine = [E2 ubiquitin-conjugating enzyme]-L-cysteine + N(6)-ubiquitinyl-[acceptor protein]-L-lysine.. Effector proteins function to alter host cell physiology and promote bacterial survival in host tissues. This protein is an E3 ubiquitin ligase that interferes with host's ubiquitination pathway. The chain is E3 ubiquitin-protein ligase SopA (sopA) from Salmonella dublin (strain CT_02021853).